The chain runs to 64 residues: Alpha-conotoxin-like Lt1.3 (64 aa).

An N-terminal signal peptide occupies residues 1–21 (MGMRMMFTMFLLVVLTTTVVS). Positions 22-45 (FNLDRESNHENRRTSNQITRGMWD) are excised as a propeptide. Cystine bridges form between Cys47/Cys53 and Cys48/Cys61. Residues 49–51 (DDP) are lacks the Ser-Xaa-Pro motif that is crucial for potent interaction with nAChR.

Belongs to the conotoxin A superfamily. In terms of tissue distribution, expressed by the venom duct.

It is found in the secreted. Its function is as follows. Alpha-conotoxins act on postsynaptic membranes, they bind to the nicotinic acetylcholine receptors (nAChR) and thus inhibit them. Has possibly a distinct nAChR binding mode from other alpha-conotoxins, due to a different three residue motif (lacks the Ser-Xaa-Pro motif). This is Alpha-conotoxin-like Lt1.3 from Conus litteratus (Lettered cone).